The sequence spans 657 residues: Translation factor GUF1, mitochondrial (657 aa).

Residues 1–39 (MRGCLQSVKWLTSALRPSQSLASSTRYPRRLLSTSAPRN) constitute a mitochondrion transit peptide. The region spanning 59-239 (ERFRNFCIVA…TVIEQIPAPV (181 aa)) is the tr-type G domain. GTP-binding positions include 121–128 (HQGEDYLL), 185–189 (INKVD), and 239–242 (VGDR).

The protein belongs to the TRAFAC class translation factor GTPase superfamily. Classic translation factor GTPase family. LepA subfamily.

It is found in the mitochondrion inner membrane. The catalysed reaction is GTP + H2O = GDP + phosphate + H(+). Its function is as follows. Promotes mitochondrial protein synthesis. May act as a fidelity factor of the translation reaction, by catalyzing a one-codon backward translocation of tRNAs on improperly translocated ribosomes. Binds to mitochondrial ribosomes in a GTP-dependent manner. The protein is Translation factor GUF1, mitochondrial of Ajellomyces capsulatus (strain H143) (Darling's disease fungus).